The primary structure comprises 157 residues: uncharacterized protein (157 aa).

This is an uncharacterized protein from Saccharomyces cerevisiae (strain ATCC 204508 / S288c) (Baker's yeast).